The following is a 437-amino-acid chain: Beta-1,3-galactosyl-O-glycosyl-glycoprotein beta-1,6-N-acetylglucosaminyltransferase 3 (437 aa).

The Cytoplasmic portion of the chain corresponds to 1–6 (MVSWRR). The helical; Signal-anchor for type II membrane protein transmembrane segment at 7-27 (FCWHYHGWTLGCYMLLAIIAL) threads the bilayer. The Lumenal segment spans residues 28 to 437 (KLSLRLKCDF…RHKAIYGTEL (410 aa)). Intrachain disulfides connect cysteine 70/cysteine 227, cysteine 161/cysteine 381, cysteine 182/cysteine 209, and cysteine 390/cysteine 422. Asparagine 288 carries N-linked (GlcNAc...) asparagine glycosylation.

This sequence belongs to the glycosyltransferase 14 family. N-glycosylated.

Its subcellular location is the golgi apparatus membrane. The catalysed reaction is a 3-O-[beta-D-galactosyl-(1-&gt;3)-N-acetyl-alpha-D-galactosaminyl]-L-seryl-[protein] + UDP-N-acetyl-alpha-D-glucosamine = 3-O-{beta-D-galactosyl-(1-&gt;3)-[N-acetyl-beta-D-glucosaminyl-(1-&gt;6)]-N-acetyl-alpha-D-galactosaminyl}-L-seryl-[protein] + UDP + H(+). It carries out the reaction a 3-O-[beta-D-galactosyl-(1-&gt;3)-N-acetyl-alpha-D-galactosaminyl]-L-threonyl-[protein] + UDP-N-acetyl-alpha-D-glucosamine = a 3-O-{beta-D-galactosyl-(1-&gt;3)-[N-acetyl-beta-D-glucosaminyl-(1-&gt;6)]-N-acetyl-alpha-D-galactosaminyl}-L-threonyl-[protein] + UDP + H(+). The enzyme catalyses a beta-D-Gal-(1-&gt;4)-beta-D-GlcNAc-(1-&gt;3)-beta-D-Gal-(1-&gt;4)-beta-D-GlcNAc derivative + UDP-N-acetyl-alpha-D-glucosamine = a beta-D-Gal-(1-&gt;4)-beta-D-GlcNAc-(1-&gt;3)-[beta-D-GlcNAc-(1-&gt;6)]-beta-D-Gal-(1-&gt;4)-N-acetyl-beta-D-glucosaminyl derivative + UDP + H(+). It catalyses the reaction 3-O-[N-acetyl-beta-D-glucosaminyl-(1-&gt;3)-N-acetyl-alpha-D-galactosaminyl]-L-seryl-[protein] + UDP-N-acetyl-alpha-D-glucosamine = 3-O-[N-acetyl-beta-D-glucosaminyl-(1-&gt;3)-[N-acetyl-beta-D-glucosaminyl-(1-&gt;6)]-N-acetyl-alpha-D-galactosaminyl]-L-seryl-[protein] + UDP + H(+). The catalysed reaction is a 3-O-[N-acetyl-beta-D-glucosaminyl-(1-&gt;3)-N-acetyl-alpha-D-galactosaminyl]-L-threonyl-[protein] + UDP-N-acetyl-alpha-D-glucosamine = 3-O-[N-acetyl-beta-D-glucosaminyl-(1-&gt;3)-[N-acetyl-beta-D-glucosaminyl-(1-&gt;6)]-N-acetyl-alpha-D-galactosaminyl]-L-threonyl-[protein] + UDP + H(+). It functions in the pathway protein modification; protein glycosylation. In terms of biological role, glycosyltransferase that can synthesize all known mucin beta 6 N-acetylglucosaminides. Mediates core 2 and core 4 O-glycan branching, 2 important steps in mucin-type biosynthesis. Also has I-branching enzyme activity by converting linear into branched poly-N-acetyllactosaminoglycans, leading to introduce the blood group I antigen during embryonic development. The chain is Beta-1,3-galactosyl-O-glycosyl-glycoprotein beta-1,6-N-acetylglucosaminyltransferase 3 (Gcnt3) from Rattus norvegicus (Rat).